Reading from the N-terminus, the 413-residue chain is Arginine biosynthesis bifunctional protein ArgJ (413 aa).

Substrate-binding residues include Thr158, Lys184, Thr195, Glu285, Asn408, and Ser413. Thr195 acts as the Nucleophile in catalysis.

It belongs to the ArgJ family. In terms of assembly, heterotetramer of two alpha and two beta chains.

Its subcellular location is the cytoplasm. It carries out the reaction N(2)-acetyl-L-ornithine + L-glutamate = N-acetyl-L-glutamate + L-ornithine. It catalyses the reaction L-glutamate + acetyl-CoA = N-acetyl-L-glutamate + CoA + H(+). It participates in amino-acid biosynthesis; L-arginine biosynthesis; L-ornithine and N-acetyl-L-glutamate from L-glutamate and N(2)-acetyl-L-ornithine (cyclic): step 1/1. Its pathway is amino-acid biosynthesis; L-arginine biosynthesis; N(2)-acetyl-L-ornithine from L-glutamate: step 1/4. In terms of biological role, catalyzes two activities which are involved in the cyclic version of arginine biosynthesis: the synthesis of N-acetylglutamate from glutamate and acetyl-CoA as the acetyl donor, and of ornithine by transacetylation between N(2)-acetylornithine and glutamate. In Bradyrhizobium diazoefficiens (strain JCM 10833 / BCRC 13528 / IAM 13628 / NBRC 14792 / USDA 110), this protein is Arginine biosynthesis bifunctional protein ArgJ.